We begin with the raw amino-acid sequence, 303 residues long: Deoxyhypusine hydroxylase (303 aa).

Met-1 carries the post-translational modification N-acetylmethionine. HEAT-like PBS-type repeat units follow at residues 23–49, 54–80, 87–113, 175–201, 206–232, and 239–265; these read ARFRALFTLRGLGGPVAISWISRAFDD, LKHELAYCLGQMQDRRAIPVLLDVLRD, VRHEAGEALGAIGDPEVLEILKQYSTD, DRYRAMFALRDAGGKEAALALAEGLRC, FRHEIGYVLGQMQHEAAVPQLAAALAQ, and VRHECAEALGAIARPACLAALRAHVAD. The Fe cation site is built by His-56, His-89, and Glu-90. His-208, His-241, and Glu-242 together coordinate Fe cation.

It belongs to the deoxyhypusine hydroxylase family. Fe(2+) is required as a cofactor.

The enzyme catalyses [eIF5A protein]-deoxyhypusine + AH2 + O2 = [eIF5A protein]-hypusine + A + H2O. It participates in protein modification; eIF5A hypusination. Catalyzes the hydroxylation of the N(6)-(4-aminobutyl)-L-lysine intermediate produced by deoxyhypusine synthase/DHPS on a critical lysine of the eukaryotic translation initiation factor 5A/eIF-5A. This is the second step of the post-translational modification of that lysine into an unusual amino acid residue named hypusine. Hypusination is unique to mature eIF-5A factor and is essential for its function. In Bos taurus (Bovine), this protein is Deoxyhypusine hydroxylase.